The chain runs to 292 residues: Aquaporin PIP1-3/PIP1-4 (292 aa).

Residues M1–P42 are disordered. The next 2 membrane-spanning stretches (helical) occupy residues I61–V81 and I96–H118. Residues N120–A122 carry the NPA 1 motif. A run of 3 helical transmembrane segments spans residues I139–F159, G181–A201, and I215–I235. An NPA 2 motif is present at residues N241–A243. The chain crosses the membrane as a helical span at residues I263 to I283.

This sequence belongs to the MIP/aquaporin (TC 1.A.8) family. PIP (TC 1.A.8.11) subfamily.

It is found in the cell membrane. In terms of biological role, aquaporins facilitate the transport of water and small neutral solutes across cell membranes. The protein is Aquaporin PIP1-3/PIP1-4 (PIP1-3) of Zea mays (Maize).